The sequence spans 122 residues: Glycine cleavage system H protein (122 aa).

The region spanning 19-101 is the Lipoyl-binding domain; the sequence is VVTVGITNYA…EKEGWLWKMT (83 aa). An N6-lipoyllysine modification is found at Lys60.

This sequence belongs to the GcvH family. In terms of assembly, the glycine cleavage system is composed of four proteins: P, T, L and H. Requires (R)-lipoate as cofactor.

Its function is as follows. The glycine cleavage system catalyzes the degradation of glycine. The H protein shuttles the methylamine group of glycine from the P protein to the T protein. This Bartonella quintana (strain Toulouse) (Rochalimaea quintana) protein is Glycine cleavage system H protein.